The chain runs to 98 residues: Bombyxin A-3 homolog (98 aa).

A signal peptide spans 1 to 18; it reads MRTQVLFLVLEVAAMASG. Intrachain disulfides connect cysteine 26-cysteine 85, cysteine 38-cysteine 98, and cysteine 84-cysteine 89. Residues 47-75 constitute a propeptide, c peptide like; that stretch reads TPYTSSESEGYGWRWLAPQRARQLAGARG.

The protein belongs to the insulin family. In terms of assembly, heterodimer of a B chain and an A chain linked by two disulfide bonds.

Its subcellular location is the secreted. Functionally, brain peptide responsible for activation of prothoracic glands to produce ecdysone in insects. The polypeptide is Bombyxin A-3 homolog (SBXA3) (Samia cynthia (Ailanthus silkmoth)).